Here is an 872-residue protein sequence, read N- to C-terminus: Leucine--tRNA ligase (872 aa).

Residues Pro-56–His-66 carry the 'HIGH' region motif. The 'KMSKS' region signature appears at Lys-629–Ser-633. Lys-632 contacts ATP.

Belongs to the class-I aminoacyl-tRNA synthetase family.

It is found in the cytoplasm. The enzyme catalyses tRNA(Leu) + L-leucine + ATP = L-leucyl-tRNA(Leu) + AMP + diphosphate. This chain is Leucine--tRNA ligase, found in Prochlorococcus marinus (strain MIT 9211).